Here is a 530-residue protein sequence, read N- to C-terminus: uncharacterized protein (530 aa).

A run of 5 helical transmembrane segments spans residues 4-23 (FLAANPLIALAVILAVGLAI), 28-47 (LFGVSLGAAAVLIVALVVST), 57-79 (FVFQLGLAMFVYVIGISAGPAFF), 91-113 (LFMITLLVSLTALAWVLIRAFGL), and 148-170 (VIGYSLAYPGAVLGSILVAAVGA). Residues 260–344 (LGGECDTKIE…MGEVRRFLGD (85 aa)) enclose the RCK C-terminal domain. A run of 4 helical transmembrane segments spans residues 352 to 374 (VNLLPFAIGLSLGLLLGAIPVPL), 379 to 398 (TMYLGFGGGPIVAGLILGAL), 419 to 441 (LGLALFLAGVGTSAGAGFRQALT), and 451 to 473 (VGFAITVTSALVCAVVGMWLLKL).

Belongs to the AAE transporter (TC 2.A.81) family.

It is found in the cell membrane. This is an uncharacterized protein from Corynebacterium efficiens (strain DSM 44549 / YS-314 / AJ 12310 / JCM 11189 / NBRC 100395).